The chain runs to 323 residues: Probable cell division protein WhiA (323 aa).

The H-T-H motif DNA-binding region spans 275–309; sequence TLKELGEMLTTGQVSKSGINHRLRKLDQIAERLRS.

This sequence belongs to the WhiA family.

Its function is as follows. Involved in cell division and chromosome segregation. This chain is Probable cell division protein WhiA, found in Listeria monocytogenes serotype 4b (strain CLIP80459).